Consider the following 201-residue polypeptide: UPF0376 protein F10G2.1 (201 aa).

The Cytoplasmic segment spans residues Met-1–His-3. Residues Phe-4–Ala-24 traverse the membrane as a helical; Signal-anchor for type II membrane protein segment. At Thr-25–Gln-201 the chain is on the extracellular side. Residues Asn-32 and Asn-124 are each glycosylated (N-linked (GlcNAc...) asparagine).

The protein belongs to the UPF0376 family.

Its subcellular location is the membrane. The polypeptide is UPF0376 protein F10G2.1 (Caenorhabditis elegans).